The sequence spans 500 residues: MAKKDKTSVKKSVKETASKKGAIEKPSKSKKITKEAAKEIAKQSSKTDVSPKKSKKEAKRASSPEPSKKSVKKQKKSKKKEESSSESESESSSSESESSSSESESSSSESESSSSESSSSESEEEVIVKTEEKKESSSESSSSSESEEEEEAVVKIEEKKESSSDSSSESSSSESESESSSSESEEEEEVVEKTEEKKEGSSESSSDSESSSDSSSESGDSDSSSDSESESSSEDEKKRKAEPASEERPAKITKPSQDSNETCTVFVGRLSWNVDDQWLGQEFEEYGTIVGARVIMDGQSGRSKGYGYVDFETPEAAKAAVAANGTKEIDGRMVNLDLSNPRPANPQPYAQQRAGNFGDQLSEPSDTVFVGNLSFNATEDDLSTAFGGCGDIQSIRLPTDPQSGRLKGFGYVTFSDIDSAKKCVEMNGHFIAGRPCRLDFSTPRTGGGSRGGRGGFGGRGGFGGRGGFGGGRGRGRGGARSGNPNRGSVAPFSGNKVTFD.

Composition is skewed to basic and acidic residues over residues 1–41 (MAKK…KEIA) and 59–68 (KRASSPEPSK). Residues 1-262 (MAKKDKTSVK…TKPSQDSNET (262 aa)) are disordered. The segment covering 69-78 (KSVKKQKKSK) has biased composition (basic residues). The span at 90–120 (ESSSSESESSSSESESSSSESESSSSESSSS) shows a compositional bias: low complexity. Over residues 126 to 137 (VIVKTEEKKESS) the composition is skewed to basic and acidic residues. 3 positions are modified to phosphoserine: S143, S144, and S146. Residues 152–163 (AVVKIEEKKESS) show a composition bias toward basic and acidic residues. Positions 164–182 (SDSSSESSSSESESESSSS) are enriched in low complexity. The segment covering 191–201 (VEKTEEKKEGS) has biased composition (basic and acidic residues). Positions 202–218 (SESSSDSESSSDSSSES) are enriched in low complexity. Over residues 219–233 (GDSDSSSDSESESSS) the composition is skewed to acidic residues. Residues 234–250 (EDEKKRKAEPASEERPA) show a composition bias toward basic and acidic residues. RRM domains follow at residues 263–341 (CTVF…LSNP) and 366–443 (DTVF…FSTP). A disordered region spans residues 441–500 (STPRTGGGSRGGRGGFGGRGGFGGRGGFGGGRGRGRGGARSGNPNRGSVAPFSGNKVTFD). Residues 445–480 (TGGGSRGGRGGFGGRGGFGGRGGFGGGRGRGRGGAR) show a composition bias toward gly residues.

It belongs to the RRM GAR family.

It localises to the nucleus. Its subcellular location is the nucleolus. In terms of biological role, helps the assembly of pre-ribosomal particles containing 18S rRNA. This chain is Protein gar2 (gar2), found in Schizosaccharomyces pombe (strain 972 / ATCC 24843) (Fission yeast).